A 192-amino-acid polypeptide reads, in one-letter code: dTTP/UTP pyrophosphatase (192 aa).

Asp-71 functions as the Proton acceptor in the catalytic mechanism.

The protein belongs to the Maf family. YhdE subfamily. A divalent metal cation serves as cofactor.

It is found in the cytoplasm. It catalyses the reaction dTTP + H2O = dTMP + diphosphate + H(+). The catalysed reaction is UTP + H2O = UMP + diphosphate + H(+). Functionally, nucleoside triphosphate pyrophosphatase that hydrolyzes dTTP and UTP. May have a dual role in cell division arrest and in preventing the incorporation of modified nucleotides into cellular nucleic acids. This is dTTP/UTP pyrophosphatase from Clostridium kluyveri (strain NBRC 12016).